Reading from the N-terminus, the 276-residue chain is F-box/LRR-repeat protein 20 (276 aa).

Residues 22-68 enclose the F-box domain; the sequence is AVINKKLPKELLLRIFSFLDVVTLCRCAQVSRAWNVLALDGSNWQRI. LRR repeat units lie at residues 74 to 100, 101 to 126, 127 to 152, 153 to 178, 179 to 204, 205 to 230, 231 to 256, and 257 to 276; these read QRDI…SLRG, CLGV…SLNG, CTKT…DLAS, CTSI…NISW, CDQV…FLKG, CTQL…NLQT, CLQI…CASG, and CSNI…PRLR.

Interacts with SKP1 and CUL1. Widely expressed, with highest expression in skeletal muscle, heart and brain.

Its subcellular location is the cytoplasm. Its function is as follows. Substrate-recognition component of the SCF (SKP1-CUL1-F-box protein)-type E3 ubiquitin ligase complex. Role in neural transmission. The protein is F-box/LRR-repeat protein 20 (Fbxl20) of Rattus norvegicus (Rat).